The sequence spans 122 residues: Large ribosomal subunit protein uL14 (122 aa).

This sequence belongs to the universal ribosomal protein uL14 family. Part of the 50S ribosomal subunit. Forms a cluster with proteins L3 and L19. In the 70S ribosome, L14 and L19 interact and together make contacts with the 16S rRNA in bridges B5 and B8.

Binds to 23S rRNA. Forms part of two intersubunit bridges in the 70S ribosome. This chain is Large ribosomal subunit protein uL14, found in Mycobacterium sp. (strain KMS).